The sequence spans 118 residues: Large ribosomal subunit protein uL22 (118 aa).

This sequence belongs to the universal ribosomal protein uL22 family. Part of the 50S ribosomal subunit.

This protein binds specifically to 23S rRNA; its binding is stimulated by other ribosomal proteins, e.g. L4, L17, and L20. It is important during the early stages of 50S assembly. It makes multiple contacts with different domains of the 23S rRNA in the assembled 50S subunit and ribosome. Functionally, the globular domain of the protein is located near the polypeptide exit tunnel on the outside of the subunit, while an extended beta-hairpin is found that lines the wall of the exit tunnel in the center of the 70S ribosome. This is Large ribosomal subunit protein uL22 from Pediococcus pentosaceus (strain ATCC 25745 / CCUG 21536 / LMG 10740 / 183-1w).